The sequence spans 184 residues: (2E)-enoyl-[ACP] glycyltransferase (184 aa).

The protein belongs to the FcoT family.

It carries out the reaction a (3R)-3-[(carboxymethyl)amino]fatty acid + holo-[ACP] + H(+) = a (2E)-enoyl-[ACP] + glycine + H2O. The catalysed reaction is (3R)-3-[(carboxylmethyl)amino]decanoate + holo-[ACP] + H(+) = (2E)-decenoyl-[ACP] + glycine + H2O. In terms of biological role, involved in the biosynthesis of a unique class of isonitrile lipopeptides (INLPs) that seem to play a role in metal acquisition in M.marinum. Catalyzes a Michael addition of glycine to the beta-position of an alpha,beta-unsaturated fatty acyl-[ACP], producing a (3R)-3-[(carboxymethyl)amino]fatty acid. Acts on the (2E)-decenoyl moiety loaded on the acyl-carrier protein MmaB, forming the product (3R)-3-[(carboxymethyl)amino]decanoate released from MmaB. The sequence is that of (2E)-enoyl-[ACP] glycyltransferase from Mycobacterium marinum (strain ATCC BAA-535 / M).